The chain runs to 208 residues: Ribonuclease HII (208 aa).

Residues 13–202 form the RNase H type-2 domain; that stretch reads DLVAGVDEVG…VRQAYEAREA (190 aa). Residues Asp19, Glu20, and Asp111 each coordinate a divalent metal cation.

The protein belongs to the RNase HII family. Requires Mn(2+) as cofactor. Mg(2+) is required as a cofactor.

The protein localises to the cytoplasm. It carries out the reaction Endonucleolytic cleavage to 5'-phosphomonoester.. Its function is as follows. Endonuclease that specifically degrades the RNA of RNA-DNA hybrids. This Pseudomonas fluorescens (strain ATCC BAA-477 / NRRL B-23932 / Pf-5) protein is Ribonuclease HII.